Consider the following 561-residue polypeptide: Tetracenomycin A2 monooxygenase-dioxygenase (561 aa).

Positions 15, 35, 128, and 152 each coordinate FAD. Y231 functions as the Proton acceptor in the catalytic mechanism. D322 contributes to the FAD binding site.

It belongs to the PheA/TfdB FAD monooxygenase family. As to quaternary structure, monomer. May form oligomers up to homohexamers. It depends on FAD as a cofactor.

The enzyme catalyses tetracenomycin A2 + 2 NADPH + 2 O2 + 2 H(+) = tetracenomycin C + 2 NADP(+) + H2O. It functions in the pathway antibiotic biosynthesis; tetracenomycin C biosynthesis. Functionally, involved in the biosynthesis of tetracenomycin C (TCM C). Catalyzes the triple hydroxylation of tetracenomycin A2 (TCM A2) at positions C-4, C-4a and C-12a to give tetracenomycin C (TCM C). Can use either NADH or NADPH as electron donors, but prefers NADPH under physiological conditions. In Streptomyces glaucescens, this protein is Tetracenomycin A2 monooxygenase-dioxygenase.